Reading from the N-terminus, the 503-residue chain is Alpha-1-syntrophin (503 aa).

2 consecutive PH domains span residues arginine 6–glycine 263 and aspartate 287–histidine 399. The segment at leucine 40–proline 68 is disordered. A PDZ domain is found at arginine 81–lysine 164. A phosphoserine mark is found at serine 95, serine 178, serine 183, serine 187, and serine 194. A disordered region spans residues threonine 177–leucine 203. The SU domain maps to proline 447–alanine 503. The segment at proline 481–alanine 503 is calmodulin-binding.

It belongs to the syntrophin family. As to quaternary structure, monomer and homodimer. Interacts with MAPK12, TGFA, GA and F-actin. Interacts with the other members of the syntrophin family: SNTB1 and SNTB2; with dystrophin protein DMD and related proteins DTNA and UTRN; SGCG and SGCA of the dystrophin glycoprotein complex; NOS1; GRB2; calmodulin and the sodium channel proteins SCN4A and SCN5A. Interacts with MYOC; regulates muscle hypertrophy. Interacts with DTNB. In terms of processing, phosphorylated by CaM-kinase II. Phosphorylation may inhibit the interaction with DMD. High expression in skeletal muscle. Expressed at intermediate level in heart, kidney and brain, and at low level in intestine, liver, lung and testis.

It localises to the cell membrane. The protein resides in the sarcolemma. Its subcellular location is the cell junction. The protein localises to the cytoplasm. It is found in the cytoskeleton. Adapter protein that binds to and probably organizes the subcellular localization of a variety of membrane proteins. May link various receptors to the actin cytoskeleton and the extracellular matrix via the dystrophin glycoprotein complex. Plays an important role in synapse formation and in the organization of UTRN and acetylcholine receptors at the neuromuscular synapse. Binds to phosphatidylinositol 4,5-bisphosphate. This Mus musculus (Mouse) protein is Alpha-1-syntrophin (Snta1).